Reading from the N-terminus, the 165-residue chain is Glutamyl-tRNA(Gln) amidotransferase subunit F, mitochondrial (165 aa).

Residues 1–19 (MKSILRSTTRNLITSSRRF) constitute a mitochondrion transit peptide.

It belongs to the GatF family. As to quaternary structure, subunit of the heterotrimeric GatFAB amidotransferase (AdT) complex, composed of A, B and F subunits.

The protein resides in the mitochondrion inner membrane. It catalyses the reaction L-glutamyl-tRNA(Gln) + L-glutamine + ATP + H2O = L-glutaminyl-tRNA(Gln) + L-glutamate + ADP + phosphate + H(+). Its function is as follows. Allows the formation of correctly charged Gln-tRNA(Gln) through the transamidation of misacylated Glu-tRNA(Gln) in the mitochondria. The reaction takes place in the presence of glutamine and ATP through an activated gamma-phospho-Glu-tRNA(Gln). Required for proper protein synthesis within the mitochondrion. The protein is Glutamyl-tRNA(Gln) amidotransferase subunit F, mitochondrial of Candida albicans (strain WO-1) (Yeast).